Consider the following 200-residue polypeptide: Recoverin (200 aa).

The N-myristoyl glycine moiety is linked to residue Gly2. EF-hand domains are found at residues 25–60, 61–96, 97–132, and 147–182; these read EEELCSWYQSFLKDCPTGRITQQQFQSIYAKFFPDT, DPKAYAQHVFRSFDSNLDGTLDFKEYVIALHMTTAG, KTNQKLEWAFSLYDVDGNGTISKNEVLEIVMAIFKM, and TPEKRAEKIWKYFGKNDDDKLTEKEFIEGTLANKEI. Position 39 is a cysteine sulfenic acid (-SOH) (Cys39). Asp74, Asn76, Asp78, Thr80, Glu85, Asp110, Asp112, Asn114, Thr116, and Glu121 together coordinate Ca(2+). The interval 189–192 is interaction with GRK1; the sequence is EPQK.

Belongs to the recoverin family. As to quaternary structure, homodimer; disulfide-linked. Homodimerization is caused by prolonged intense illumination. May form a complex composed of RHO, GRK1 and RCVRN in a Ca(2+)-dependent manner; RCVRN prevents the interaction between GRK1 and RHO. Interacts (via C-terminus) with GRK1 (via N-terminus); the interaction is Ca(2+)-dependent. The N-terminal glycine is linked to one of four different types of acyl groups. The most abundant is myristoleate (14:1), but 14:0, 14:2, and 12:0 acyl residues are also present. The Ca(2+) induced exposure of the myristoyl group, known as the calcium-myristoyl switch, promotes RCVRN binding to the photoreceptor cell membranes only when intracellular Ca(2+) concentration is high. Post-translationally, oxidation on Cys-39 occurs in response to prolonged intense illumination and results in the formation of disulfide homodimers, and to a lesser extent disulfide-linked heterodimers. In terms of tissue distribution, retina and pineal gland.

It is found in the photoreceptor inner segment. The protein resides in the cell projection. It localises to the cilium. Its subcellular location is the photoreceptor outer segment. The protein localises to the photoreceptor outer segment membrane. It is found in the perikaryon. Acts as a calcium sensor and regulates phototransduction of cone and rod photoreceptor cells. Modulates light sensitivity of cone photoreceptor in dark and dim conditions. In response to high Ca(2+) levels induced by low light levels, prolongs RHO/rhodopsin activation in rod photoreceptor cells by binding to and inhibiting GRK1-mediated phosphorylation of RHO/rhodopsin. Plays a role in scotopic vision/enhances vision in dim light by enhancing signal transfer between rod photoreceptors and rod bipolar cells. Improves rod photoreceptor sensitivity in dim light and mediates response of rod photoreceptors to facilitate detection of change and motion in bright light. The chain is Recoverin (RCVRN) from Homo sapiens (Human).